A 442-amino-acid chain; its full sequence is UPF0489 protein C5orf22 homolog (442 aa).

Residues 175-208 are disordered; the sequence is SSAKKPKLALEDSRNTASTNCDSSSEGLEKDTAT. Polar residues predominate over residues 189-200; the sequence is NTASTNCDSSSE.

This sequence belongs to the UPF0489 family.

The chain is UPF0489 protein C5orf22 homolog from Pongo abelii (Sumatran orangutan).